A 558-amino-acid polypeptide reads, in one-letter code: Formate--tetrahydrofolate ligase (558 aa).

Residue 67–74 participates in ATP binding; it reads TPAGEGKT.

It belongs to the formate--tetrahydrofolate ligase family.

The enzyme catalyses (6S)-5,6,7,8-tetrahydrofolate + formate + ATP = (6R)-10-formyltetrahydrofolate + ADP + phosphate. Its pathway is one-carbon metabolism; tetrahydrofolate interconversion. In Ruegeria sp. (strain TM1040) (Silicibacter sp.), this protein is Formate--tetrahydrofolate ligase.